Consider the following 406-residue polypeptide: Alpha-1-antitrypsin (406 aa).

Residues 1–24 (MTSSISWGLLLLAGLCCLVPSFLA) form the signal peptide. S33 is modified (phosphoserine). Residues N59, N96, and N260 are each glycosylated (N-linked (GlcNAc...) asparagine). The RCL stretch occupies residues 362 to 381 (GTTVLEAVPMSIPPDVCFKN). S372 carries the phosphoserine modification.

This sequence belongs to the serpin family. In terms of assembly, interacts with CELA2A. Interacts with ERGIC3 and LMAN1/ERGIC53. Interacts with PRSS1/Trypsin. In terms of tissue distribution, plasma.

The protein resides in the secreted. Inhibitor of serine proteases. Can inhibit elastase, trypsin, chymotrypsin and plasmin. This chain is Alpha-1-antitrypsin, found in Meriones unguiculatus (Mongolian jird).